The sequence spans 195 residues: Imidazoleglycerol-phosphate dehydratase (195 aa).

This sequence belongs to the imidazoleglycerol-phosphate dehydratase family.

It is found in the cytoplasm. The enzyme catalyses D-erythro-1-(imidazol-4-yl)glycerol 3-phosphate = 3-(imidazol-4-yl)-2-oxopropyl phosphate + H2O. Its pathway is amino-acid biosynthesis; L-histidine biosynthesis; L-histidine from 5-phospho-alpha-D-ribose 1-diphosphate: step 6/9. The protein is Imidazoleglycerol-phosphate dehydratase of Endomicrobium trichonymphae.